The sequence spans 187 residues: MTVPSALVPILLLGTAAVMVQCLPLSFQRNDTVERRWETLFSRSMGEKKDTSRDSDYLLGIKRQRRLYCNVGIGFHIQVLPDGRINGMHSENRYSLLELSPVEVGVVSLYGVKSGMFVAMNAKGKLYGSRYFNEECKFKETLLPNNYNAYESRKYPGMYIALGKNGRTKKGNRVSPTMTLTHFLPRI.

The signal sequence occupies residues 1 to 22 (MTVPSALVPILLLGTAAVMVQC).

Belongs to the heparin-binding growth factors family.

It is found in the secreted. In terms of biological role, plays an important role in the regulation of embryonic development, cell proliferation, and cell differentiation. Good candidate for an inducing factor with possible roles both in mesoderm induction at the blastula stage and in the formation of the anteroposterior axis at the gastrula stage. The protein is Fibroblast growth factor 4A (fgf4-a) of Xenopus laevis (African clawed frog).